Here is a 173-residue protein sequence, read N- to C-terminus: Putative phosphoesterase GK0864 (173 aa).

Histidine 34 (proton donor) is an active-site residue. 2 consecutive short sequence motifs (HXTX) follow at residues 34–37 and 115–118; these read HITL and HITI. Histidine 115 functions as the Proton acceptor in the catalytic mechanism.

Belongs to the 2H phosphoesterase superfamily. YjcG family.

The sequence is that of Putative phosphoesterase GK0864 from Geobacillus kaustophilus (strain HTA426).